The primary structure comprises 1423 residues: ABC transporter G family member 40 (1423 aa).

Residues 1–19 show a composition bias toward polar residues; the sequence is MEGTSFHQASNSMRRNSSV. Residues 1 to 36 are disordered; the sequence is MEGTSFHQASNSMRRNSSVWKKDSGREIFSRSSREE. The N-linked (GlcNAc...) asparagine glycan is linked to Asn-16. The span at 20-34 shows a compositional bias: basic and acidic residues; it reads WKKDSGREIFSRSSR. One can recognise an ABC transporter 1 domain in the interval 154–427; that stretch reads LNTLHLVPNR…FETMGFKCPP (274 aa). 187-194 contributes to the ATP binding site; it reads GPPSSGKT. An N-linked (GlcNAc...) asparagine glycan is attached at Asn-376. The ABC transmembrane type-2 1 domain occupies 505 to 718; it reads ELVKTSFSRE…GQNAILANEF (214 aa). 6 helical membrane-spanning segments follow: residues 523 to 543, 562 to 582, 611 to 631, 643 to 663, 667 to 687, and 696 to 716; these read FVYYFKFGQLLVMAFLTMTLF, ALFFILMMLMFNGMSELSMTI, IPISFMEAALTTFITYYVIGF, ILLVLMNQMASALFKMVAALG, IVANTFGAFAMLVFFALGGVV, and WWIWGYWISPIMYGQNAILAN. The N-linked (GlcNAc...) asparagine glycan is linked to Asn-729. A helical membrane pass occupies residues 756–776; it reads GALLGFVVLFNFGFTLALTFL. The ABC transporter 2 domain maps to 825-1077; that stretch reads ITFDNVVYSV…HLINYFESIQ (253 aa). Residue 870-877 coordinates ATP; the sequence is GVSGAGKT. Asn-895 carries an N-linked (GlcNAc...) asparagine glycan. Thr-962 carries the phosphothreonine modification. One can recognise an ABC transmembrane type-2 2 domain in the interval 1150-1364; sequence TQCMASLWKQ…TLYGLIASQF (215 aa). 6 consecutive transmembrane segments (helical) span residues 1174–1194, 1207–1227, 1257–1277, 1284–1304, 1314–1334, and 1341–1361; these read FLFTIGIALMFGTMFWDLGGK, SMYTAVLFLGLQNAASVQPVV, IPYVLVQAIVYGLIVYAMIGF, FFWYLFFMYGSFLTFTFYGMM, IASVVSSAFYGIWNLFSGFLI, and VWWEWYYWLCPVAWTLYGLIA. Residue Asn-1375 is glycosylated (N-linked (GlcNAc...) asparagine). A helical membrane pass occupies residues 1395–1415; sequence VVAAMNVIFPLLFAVIFAIGI.

The protein belongs to the ABC transporter superfamily. ABCG family. PDR (TC 3.A.1.205) subfamily. As to quaternary structure, interacts with LECRK91 and LECRK92. Mostly observed in inflorescence meristems relative to cauline leaves and developing siliques. Ubiquitous with higher levels in leaves, stems and flowers. Also present in primary and lateral roots. In seeds, mainly expressed in the embryo and, to a lesser extent, in the endosperm.

Its subcellular location is the cell membrane. The catalysed reaction is abscisate(out) + ATP + H2O = abscisate(in) + ADP + phosphate + H(+). Inhibited by glibenclamide, verapamil and vanadate (ABC transporters inhibitors). High affinity abscisic acid (ABA) transporter that mediates the import of ABA, with a preference for (+)-ABA, through the plasma membrane, especially in guard cells, and is involved in the intercellular and intracellular ABA signaling pathways leading, for example, to stomatal closure, thus conferring drought tolerance. Together with ABCG30, import into the embryo the ABA delivered from the endosperm via ABCG25 and ABCG31-mediated export to suppress radicle extension and subsequent embryonic growth. May be a general defense protein. Functions as a pump to exclude Pb(2+) ions and/or Pb(2+)-containing toxic compounds from the cytoplasm. Contributes to Pb(2+) ions resistance. Confers some resistance to the terpene sclareol. Its function is as follows. (Microbial infection) Involved in resistance response to the pathogenic oomycetes Phytophthora infestans and Phytophthora capsici. The sequence is that of ABC transporter G family member 40 from Arabidopsis thaliana (Mouse-ear cress).